Consider the following 409-residue polypeptide: NADH-quinone oxidoreductase subunit D 1 (409 aa).

It belongs to the complex I 49 kDa subunit family. In terms of assembly, NDH-1 is composed of 14 different subunits. Subunits NuoB, C, D, E, F, and G constitute the peripheral sector of the complex.

It is found in the cell inner membrane. The enzyme catalyses a quinone + NADH + 5 H(+)(in) = a quinol + NAD(+) + 4 H(+)(out). Functionally, NDH-1 shuttles electrons from NADH, via FMN and iron-sulfur (Fe-S) centers, to quinones in the respiratory chain. The immediate electron acceptor for the enzyme in this species is believed to be ubiquinone. Couples the redox reaction to proton translocation (for every two electrons transferred, four hydrogen ions are translocated across the cytoplasmic membrane), and thus conserves the redox energy in a proton gradient. This is NADH-quinone oxidoreductase subunit D 1 from Solibacter usitatus (strain Ellin6076).